The primary structure comprises 275 residues: 4-hydroxy-3-methylbut-2-enyl diphosphate reductase (275 aa).

Position 12 (C12) interacts with [4Fe-4S] cluster. (2E)-4-hydroxy-3-methylbut-2-enyl diphosphate-binding residues include H36 and H70. The dimethylallyl diphosphate site is built by H36 and H70. Isopentenyl diphosphate-binding residues include H36 and H70. C92 lines the [4Fe-4S] cluster pocket. Residue H120 participates in (2E)-4-hydroxy-3-methylbut-2-enyl diphosphate binding. H120 serves as a coordination point for dimethylallyl diphosphate. Residue H120 coordinates isopentenyl diphosphate. E122 functions as the Proton donor in the catalytic mechanism. T158 contacts (2E)-4-hydroxy-3-methylbut-2-enyl diphosphate. Residue C186 participates in [4Fe-4S] cluster binding. (2E)-4-hydroxy-3-methylbut-2-enyl diphosphate contacts are provided by S214, S215, N216, and S258. Residues S214, S215, N216, and S258 each coordinate dimethylallyl diphosphate. Residues S214, S215, N216, and S258 each contribute to the isopentenyl diphosphate site.

It belongs to the IspH family. [4Fe-4S] cluster serves as cofactor.

It catalyses the reaction isopentenyl diphosphate + 2 oxidized [2Fe-2S]-[ferredoxin] + H2O = (2E)-4-hydroxy-3-methylbut-2-enyl diphosphate + 2 reduced [2Fe-2S]-[ferredoxin] + 2 H(+). The catalysed reaction is dimethylallyl diphosphate + 2 oxidized [2Fe-2S]-[ferredoxin] + H2O = (2E)-4-hydroxy-3-methylbut-2-enyl diphosphate + 2 reduced [2Fe-2S]-[ferredoxin] + 2 H(+). It participates in isoprenoid biosynthesis; dimethylallyl diphosphate biosynthesis; dimethylallyl diphosphate from (2E)-4-hydroxy-3-methylbutenyl diphosphate: step 1/1. It functions in the pathway isoprenoid biosynthesis; isopentenyl diphosphate biosynthesis via DXP pathway; isopentenyl diphosphate from 1-deoxy-D-xylulose 5-phosphate: step 6/6. Functionally, catalyzes the conversion of 1-hydroxy-2-methyl-2-(E)-butenyl 4-diphosphate (HMBPP) into a mixture of isopentenyl diphosphate (IPP) and dimethylallyl diphosphate (DMAPP). Acts in the terminal step of the DOXP/MEP pathway for isoprenoid precursor biosynthesis. This Sulfurimonas denitrificans (strain ATCC 33889 / DSM 1251) (Thiomicrospira denitrificans (strain ATCC 33889 / DSM 1251)) protein is 4-hydroxy-3-methylbut-2-enyl diphosphate reductase.